The following is a 462-amino-acid chain: Squalene synthase LSS (462 aa).

2 residues coordinate NADP(+): arginine 48 and arginine 73. Residues aspartate 76, glutamate 79, and aspartate 80 each contribute to the Mg(2+) site. Residues arginine 214, lysine 314, and arginine 316 each coordinate NADP(+). 2 helical membrane-spanning segments follow: residues 399–419 and 436–456; these read LVLVLGLGYCVYAFNLLPLLW and LGLPHQIIAVFCVLTAGYQVF.

This sequence belongs to the phytoene/squalene synthase family. The cofactor is Mg(2+).

The protein resides in the membrane. The enzyme catalyses 2 (2E,6E)-farnesyl diphosphate + NADH + H(+) = squalene + 2 diphosphate + NAD(+). It catalyses the reaction 2 (2E,6E)-farnesyl diphosphate + NADPH + H(+) = squalene + 2 diphosphate + NADP(+). Its function is as follows. Converts farnesyl diphosphate (FPP) into squalene, a precursor for sterol biosynthesis in eukaryotes. This chain is Squalene synthase LSS, found in Botryococcus braunii (Green alga).